Here is a 112-residue protein sequence, read N- to C-terminus: Large ribosomal subunit protein bL17 (112 aa).

It belongs to the bacterial ribosomal protein bL17 family. Part of the 50S ribosomal subunit. Contacts protein L32.

The sequence is that of Large ribosomal subunit protein bL17 from Desulforamulus reducens (strain ATCC BAA-1160 / DSM 100696 / MI-1) (Desulfotomaculum reducens).